The chain runs to 98 residues: DNA-binding protein Fis (98 aa).

A DNA-binding region (H-T-H motif) is located at residues 74–93 (QTRAATMMGINRGTLRKKLK).

Belongs to the transcriptional regulatory Fis family. Homodimer.

In terms of biological role, activates ribosomal RNA transcription. Plays a direct role in upstream activation of rRNA promoters. The chain is DNA-binding protein Fis from Vibrio parahaemolyticus serotype O3:K6 (strain RIMD 2210633).